A 404-amino-acid polypeptide reads, in one-letter code: Metacaspase-1A (404 aa).

Basic residues predominate over residues 1–10 (MNPHHSHHHS). Positions 1-100 (MNPHHSHHHS…PSDPVSFGQG (100 aa)) are disordered. The segment covering 24 to 51 (QQQPPSNPYQYNQPSPQPYQGSQPPQNG) has biased composition (low complexity). Residues H200 and C256 contribute to the active site.

It belongs to the peptidase C14B family.

In terms of biological role, involved in cell death (apoptosis). This chain is Metacaspase-1A (casA), found in Aspergillus niger (strain ATCC MYA-4892 / CBS 513.88 / FGSC A1513).